A 502-amino-acid chain; its full sequence is MEKFQGYLEFDGARQQSFLYPLFFREYIYVLAYDHGLNRLNKNRSIFLENADYDKKYSSLIVKRIILRMYEQNRLIIPTTDLHKNLGHTNLFYYQMISVLFAVIVEIPFSLRLGSSFEGKQLKKSYNLQSIHSIFPFLEDKLSHFNYVLDVLIPYPIHLEVLVQTLRYRVKDASSLHFFRFCLYEYCNWKNFDIQKKCILNPRFLLFLYNSHICEYESIFFFLRKRSSHLRSTAYEVFFERILFYGKIQNFLKVFVNNFPAMLGLFKDPFLHYVRYHGKSILATKDTPLLMNKWKFYFVNLWQCYFSVWFQSQKVNINQLSKDNLEFLGYLSSLRLNPLVVRSQMLENSFLIDNIRIKLDSKIPISSIIGSLAKDKFCNVLGHPISKATWTDSSDSDILNRFVRICRNISHYYSGSSKKKNLYRINYILRLCCVKTLARKHKSTVRAFLKRLGSGLLEEFLTGEDQVLSLIFPRSYYASKRLYRVRIWYLDILYLNDLVNNE.

It belongs to the intron maturase 2 family. MatK subfamily.

Its subcellular location is the plastid. It localises to the chloroplast. In terms of biological role, usually encoded in the trnK tRNA gene intron. Probably assists in splicing its own and other chloroplast group II introns. This is Maturase K from Arabis blepharophylla (Coast rock-cress).